The chain runs to 296 residues: Probable lipid kinase YegS-like (296 aa).

A DAGKc domain is found at 1–130 (MPHTLLILNG…IDLAQVNDKH (130 aa)). Residues Thr-37, 63 to 69 (GDGTINE), and Thr-92 contribute to the ATP site. Mg(2+)-binding residues include Leu-212, Asp-215, and Leu-217. Catalysis depends on Glu-268, which acts as the Proton acceptor.

This sequence belongs to the diacylglycerol/lipid kinase family. YegS lipid kinase subfamily. Requires Mg(2+) as cofactor. Ca(2+) serves as cofactor.

It is found in the cytoplasm. Its function is as follows. Probably phosphorylates lipids; the in vivo substrate is unknown. This is Probable lipid kinase YegS-like from Yersinia enterocolitica serotype O:8 / biotype 1B (strain NCTC 13174 / 8081).